Reading from the N-terminus, the 401-residue chain is Probable 2,3-bisphosphoglycerate-independent phosphoglycerate mutase (401 aa).

This sequence belongs to the BPG-independent phosphoglycerate mutase family. A-PGAM subfamily.

It catalyses the reaction (2R)-2-phosphoglycerate = (2R)-3-phosphoglycerate. Its pathway is carbohydrate degradation; glycolysis; pyruvate from D-glyceraldehyde 3-phosphate: step 3/5. In terms of biological role, catalyzes the interconversion of 2-phosphoglycerate and 3-phosphoglycerate. The chain is Probable 2,3-bisphosphoglycerate-independent phosphoglycerate mutase from Thermotoga petrophila (strain ATCC BAA-488 / DSM 13995 / JCM 10881 / RKU-1).